We begin with the raw amino-acid sequence, 557 residues long: TBCC domain-containing protein 1 (557 aa).

In terms of domain architecture, C-CAP/cofactor C-like spans 290–435; the sequence is TTKRAKIACN…LEDHMARTGL (146 aa).

Belongs to the TBCC family.

Its subcellular location is the cytoplasm. It is found in the cytoskeleton. The protein localises to the microtubule organizing center. It localises to the centrosome. The protein resides in the spindle pole. In terms of biological role, plays a role in the regulation of centrosome and Golgi apparatus positioning, with consequences on cell shape and cell migration. In Homo sapiens (Human), this protein is TBCC domain-containing protein 1 (TBCCD1).